Reading from the N-terminus, the 323-residue chain is tRNA U34 carboxymethyltransferase (323 aa).

Carboxy-S-adenosyl-L-methionine is bound by residues K91, W105, K110, G130, 152-154 (DPT), 181-182 (IE), M196, Y200, and R315.

Belongs to the class I-like SAM-binding methyltransferase superfamily. CmoB family. In terms of assembly, homotetramer.

The enzyme catalyses carboxy-S-adenosyl-L-methionine + 5-hydroxyuridine(34) in tRNA = 5-carboxymethoxyuridine(34) in tRNA + S-adenosyl-L-homocysteine + H(+). Catalyzes carboxymethyl transfer from carboxy-S-adenosyl-L-methionine (Cx-SAM) to 5-hydroxyuridine (ho5U) to form 5-carboxymethoxyuridine (cmo5U) at position 34 in tRNAs. The sequence is that of tRNA U34 carboxymethyltransferase from Escherichia coli (strain SE11).